A 444-amino-acid chain; its full sequence is Aflatoxin biosynthesis regulatory protein (444 aa).

The disordered stretch occupies residues 1–25 (MVDHISPRASPGPIRSSQTRRARKL). The segment at residues 29–56 (CTSCASSKVRCTKEKPACARCIERGLAC) is a DNA-binding region (zn(2)-C6 fungal-type). The disordered stretch occupies residues 64-174 (MGRNPRAPSP…AGQEQSTLSS (111 aa)). A compositionally biased stretch (basic residues) spans 106 to 116 (TQAHTHAHSHP). A compositionally biased stretch (low complexity) spans 120–130 (PQSHPQSNQPP). Positions 136–149 (PNGSSSVSAIFSHQ) are enriched in polar residues.

Interacts with aflS.

Its subcellular location is the nucleus. Functionally, transcription factor; part of the gene cluster that mediates the biosynthesis of aflatoxin, a polyketide-derived furanocoumarin which is part of the most toxic and carcinogenic compounds among the known mycotoxins. Binds to at least 17 genes in the aflatoxin biosynthetic cluster, leading to the activation of an enzymatic cascade reaction that results in aflatoxin biosynthesis. Promoter regions of several biosynthesis genes are bound by aflR in a dimeric form with a 5'-TCG(N5)CGA-3' binding motif. AflR also recognizes 5'-TTAGGCCTAA-3' and 5'-TCGCAGCCCGG-3' binding sequences. AflR achieves its binding specificity through a mechanism in which either two copies of aflR or its complex with aflS bind to target sites on DNA in a highly cooperative manner. AflS acts as a modulator of aflR's DNA-binding by decreasing its DNA-binding affinity. In addition to aflatoxin biosynthesis, also plays a positive role in the fungal growth, spore germination, sclerotial development, and carbohydrate metabolism. The polypeptide is Aflatoxin biosynthesis regulatory protein (Aspergillus flavus (strain ATCC 200026 / FGSC A1120 / IAM 13836 / NRRL 3357 / JCM 12722 / SRRC 167)).